A 426-amino-acid polypeptide reads, in one-letter code: D-tagatose-1,6-bisphosphate aldolase subunit KbaZ (426 aa).

It belongs to the GatZ/KbaZ family. KbaZ subfamily. In terms of assembly, forms a complex with KbaY.

The protein operates within carbohydrate metabolism; D-tagatose 6-phosphate degradation; D-glyceraldehyde 3-phosphate and glycerone phosphate from D-tagatose 6-phosphate: step 2/2. Its function is as follows. Component of the tagatose-1,6-bisphosphate aldolase KbaYZ that is required for full activity and stability of the Y subunit. Could have a chaperone-like function for the proper and stable folding of KbaY. When expressed alone, KbaZ does not show any aldolase activity. The protein is D-tagatose-1,6-bisphosphate aldolase subunit KbaZ of Escherichia coli O6:H1 (strain CFT073 / ATCC 700928 / UPEC).